The following is an 842-amino-acid chain: DNA topoisomerase-like protein cin-4 (842 aa).

The segment covering methionine 1–asparagine 26 has biased composition (basic and acidic residues). The disordered stretch occupies residues methionine 1–glycine 50. Residues isoleucine 314 to leucine 783 enclose the Topo IIA-type catalytic domain.

The protein belongs to the type II topoisomerase family.

Plays a role in the removal of cohesin from kinetochores on mitotic chromosomes and is required for centromere resolution. The protein is DNA topoisomerase-like protein cin-4 of Caenorhabditis elegans.